Consider the following 41-residue polypeptide: Large ribosomal subunit protein bL36 (41 aa).

It belongs to the bacterial ribosomal protein bL36 family.

The chain is Large ribosomal subunit protein bL36 from Stenotrophomonas maltophilia (strain R551-3).